We begin with the raw amino-acid sequence, 131 residues long: Profilin-8 (131 aa).

Cys-13 and Cys-115 are joined by a disulfide. The short motif at 81–97 (AVIRGKKGAGGITIKKT) is the Involved in PIP2 interaction element. Thr-111 carries the post-translational modification Phosphothreonine.

This sequence belongs to the profilin family. As to quaternary structure, occurs in many kinds of cells as a complex with monomeric actin in a 1:1 ratio. Phosphorylated by MAP kinases.

Its subcellular location is the cytoplasm. The protein localises to the cytoskeleton. Binds to actin and affects the structure of the cytoskeleton. At high concentrations, profilin prevents the polymerization of actin, whereas it enhances it at low concentrations. In Phleum pratense (Common timothy), this protein is Profilin-8.